The following is a 774-amino-acid chain: Armadillo-like helical domain-containing protein 4 (774 aa).

The signal sequence occupies residues 1 to 27 (MRGPIVLHICLAFCSLLLFSVATQCLA). Residues 28-714 (FPKIERRREI…KDKAGYMSGM (687 aa)) are Extracellular-facing. Basic and acidic residues predominate over residues 41–52 (HAEKGQSDKMNT). Disordered stretches follow at residues 41-63 (HAEK…VTSK) and 97-135 (QPGQ…ERIS). Asparagine 57 carries N-linked (GlcNAc...) asparagine glycosylation. An N-linked (GlcNAc...) asparagine glycan is attached at asparagine 189. Residues 221–233 (KTEKFEADTDHRT) show a composition bias toward basic and acidic residues. Disordered regions lie at residues 221–275 (KTEK…QPLE) and 600–669 (ASYG…PGLE). Residues 258–275 (SQMTADNTQAAATKQPLE) show a composition bias toward polar residues. Residues 607–651 (LESEEGQEDEDEEDEEDEDEEEEDEEEDEEDKDADSLDEGLDGDT) show a composition bias toward acidic residues. The helical transmembrane segment at 715 to 735 (LVPVGVGIAGALFILGALYSI) threads the bilayer. At 736–774 (KVMNRRRRNGFKRHKRKQREFNSMQDRVMLLADSSEDEF) the chain is on the cytoplasmic side. A phosphoserine mark is found at serine 769 and serine 770.

In terms of assembly, interacts with IL6ST; this interaction prevents IL6ST protein homodimerization and bridges ARMH4 with IL6R and STAT3 and therefore inhibits phosphorylation of STAT3 at 'Tyr-705'. Interacts (via cytoplasmic tail) with RICTOR; this interaction bridges ARMH4 to the mTORC2 complex and inhibits the mTORC2 kinase activity. In terms of tissue distribution, expressed in podocytes.

Its subcellular location is the membrane. May modulate immune response and may play a role in inflammation. Down-modulates STAT3 signaling throught direct interaction with IL6ST, resulting in the inhibition of phosphorylation of STAT3 at 'Tyr-705'. May negatively regulates AKT signaling by modulating the activity of mTORC2 complex through RICTOR interaction. The polypeptide is Armadillo-like helical domain-containing protein 4 (Homo sapiens (Human)).